Here is a 267-residue protein sequence, read N- to C-terminus: Translation initiation factor 2 subunit alpha (267 aa).

Residues 12–83 (GEYVIATVKE…RRKTVDVSLK (72 aa)) enclose the S1 motif domain.

The protein belongs to the eIF-2-alpha family. Heterotrimer composed of an alpha, a beta and a gamma chain.

In terms of biological role, eIF-2 functions in the early steps of protein synthesis by forming a ternary complex with GTP and initiator tRNA. The chain is Translation initiation factor 2 subunit alpha from Staphylothermus marinus (strain ATCC 43588 / DSM 3639 / JCM 9404 / F1).